The sequence spans 370 residues: Quinolinate synthase (370 aa).

Iminosuccinate-binding residues include H62 and S83. C128 serves as a coordination point for [4Fe-4S] cluster. Iminosuccinate-binding positions include 154 to 156 (YAN) and S171. C215 lines the [4Fe-4S] cluster pocket. Iminosuccinate contacts are provided by residues 241–243 (HPE) and T258. C312 is a binding site for [4Fe-4S] cluster.

The protein belongs to the quinolinate synthase family. Type 1 subfamily. The cofactor is [4Fe-4S] cluster.

The protein resides in the cytoplasm. The catalysed reaction is iminosuccinate + dihydroxyacetone phosphate = quinolinate + phosphate + 2 H2O + H(+). Its pathway is cofactor biosynthesis; NAD(+) biosynthesis; quinolinate from iminoaspartate: step 1/1. Its function is as follows. Catalyzes the condensation of iminoaspartate with dihydroxyacetone phosphate to form quinolinate. The sequence is that of Quinolinate synthase from Neisseria meningitidis serogroup A / serotype 4A (strain DSM 15465 / Z2491).